The primary structure comprises 102 residues: Small ribosomal subunit protein uS10 (102 aa).

The protein belongs to the universal ribosomal protein uS10 family. Part of the 30S ribosomal subunit.

Involved in the binding of tRNA to the ribosomes. The protein is Small ribosomal subunit protein uS10 of Saccharolobus islandicus (strain M.16.4 / Kamchatka #3) (Sulfolobus islandicus).